We begin with the raw amino-acid sequence, 366 residues long: MTPEHLPTEQYEAQLAEKVVRLQSMMAPFSDLVPEVFRSPVSHYRMRAEFRIWHDGDDLYHIIFDQQTKSRIRVDSFPAASELINQLMTAMIAGVRNNPVLRHKLFQIDYLTTLSNQAVVSLLYHKKLDDEWRQQAEALRDALRAQNLNVHLIGRATKTKIELDQDYIDERLPVAGKEMIYRQVENSFTQPNAAMNIQMLEWALDVTKGSKGDLLELYCGNGNFSLALARNFDRVLATEIAKPSVAAAQYNIAANHIDNVQIIRMAAEEFTQAMNGVREFNRLQGIDLKSYQCETIFVDPPRSGLDSETEKMVQAYPRILYISCNPETLCKNLETLSQTHKVERLALFDQFPYTHHMECGVLLTAK.

S-adenosyl-L-methionine-binding residues include Gln190, Tyr218, Asn223, Glu239, and Asp299. Catalysis depends on Cys324, which acts as the Nucleophile. Residue Glu358 is the Proton acceptor of the active site.

This sequence belongs to the class I-like SAM-binding methyltransferase superfamily. RNA M5U methyltransferase family. TrmA subfamily.

The enzyme catalyses uridine(54) in tRNA + S-adenosyl-L-methionine = 5-methyluridine(54) in tRNA + S-adenosyl-L-homocysteine + H(+). It carries out the reaction uridine(341) in tmRNA + S-adenosyl-L-methionine = 5-methyluridine(341) in tmRNA + S-adenosyl-L-homocysteine + H(+). Its function is as follows. Dual-specificity methyltransferase that catalyzes the formation of 5-methyluridine at position 54 (m5U54) in all tRNAs, and that of position 341 (m5U341) in tmRNA (transfer-mRNA). The chain is tRNA/tmRNA (uracil-C(5))-methyltransferase from Escherichia coli O127:H6 (strain E2348/69 / EPEC).